Reading from the N-terminus, the 299-residue chain is Protease HtpX homolog (299 aa).

2 helical membrane-spanning segments follow: residues 14–34 (IVLL…VGYL) and 39–59 (LVGG…SMIF). Residue His-143 coordinates Zn(2+). Glu-144 is an active-site residue. Residue His-147 participates in Zn(2+) binding. Transmembrane regions (helical) follow at residues 158-178 (IAVA…RMMW) and 198-218 (IILL…ASLV). Residue Glu-227 coordinates Zn(2+).

It belongs to the peptidase M48B family. Zn(2+) serves as cofactor.

It is found in the cell membrane. This chain is Protease HtpX homolog, found in Streptococcus mutans serotype c (strain ATCC 700610 / UA159).